A 335-amino-acid chain; its full sequence is Protein-arginine N-acetylglucosaminyltransferase SseK3 (335 aa).

Residues 51–53 (QWF) and Tyr75 contribute to the UDP-N-acetyl-alpha-D-glucosamine site. Arg153 and Arg184 each carry an N-beta-linked (GlcNAc) arginine; by autocatalysis glycan. 224-227 (YLDA) serves as a coordination point for UDP-N-acetyl-alpha-D-glucosamine. The DXD motif signature appears at 226–228 (DAD). Asp228 is a binding site for Mn(2+). Catalysis depends on Glu258, which acts as the Proton acceptor. Residue Arg305 is glycosylated (N-beta-linked (GlcNAc) arginine; by autocatalysis). Positions 325 and 327 each coordinate Mn(2+). UDP-N-acetyl-alpha-D-glucosamine contacts are provided by residues Ser327 and 332–335 (SSWR). N-beta-linked (GlcNAc) arginine; by autocatalysis glycosylation occurs at Arg335.

The protein belongs to the glycosyltransferase NleB family. Interacts with host TRIM32; without mediating its GlcNAcylation. Mn(2+) is required as a cofactor. Auto-glycosylated: arginine GlcNAcylation is required for activity toward death domain-containing host target proteins.

It is found in the secreted. It localises to the host Golgi apparatus. The catalysed reaction is L-arginyl-[protein] + UDP-N-acetyl-alpha-D-glucosamine = N(omega)-(N-acetyl-beta-D-glucosaminyl)-L-arginyl-[protein] + UDP + H(+). Protein-arginine N-acetylglucosaminyltransferase effector that disrupts TNF signaling in infected cells, including NF-kappa-B signaling and apoptosis. Acts by catalyzing the transfer of a single N-acetylglucosamine (GlcNAc) to a conserved arginine residue in the death domain of host proteins such as TRADD, TNFRSF1A/TNFR1 and TNFRSF10B/TRAILR2: arginine GlcNAcylation prevents homotypic/heterotypic death domain interactions and assembly of the oligomeric TNF-alpha receptor complex, thereby disrupting TNF signaling. Also acts on host proteins without a death domain: catalyzes arginine GlcNAcylation of host small Rab GTPase (Rab1, Rab5 and Rab11), thereby preventing GTPase activity and leading to impaired host vesicular protein transport. Also mediates auto-GlcNAcylation, which is required for activity toward death domain-containing host target proteins. The sequence is that of Protein-arginine N-acetylglucosaminyltransferase SseK3 from Salmonella typhimurium (strain SL1344).